The chain runs to 418 residues: Voltage-gated ClC-type chloride channel ClcB (418 aa).

10 consecutive transmembrane segments (helical) span residues 5-25 (LLIA…FRHA), 54-74 (LLTP…WQKF), 146-166 (LWIA…PLAG), 168-188 (LFIA…PVII), 222-242 (ALII…LTLM), 258-278 (WQLA…PAVW), 291-311 (APPL…AVLA), 316-336 (GAPG…GMLY), 352-372 (LLLG…APIM), and 380-400 (MTGE…ASVI).

It belongs to the chloride channel (TC 2.A.49) family. ClcB subfamily.

Its subcellular location is the cell inner membrane. In terms of biological role, probably acts as an electrical shunt for an outwardly-directed proton pump that is linked to amino acid decarboxylation, as part of the extreme acid resistance (XAR) response. In Escherichia coli (strain SMS-3-5 / SECEC), this protein is Voltage-gated ClC-type chloride channel ClcB.